The following is a 413-amino-acid chain: Eukaryotic initiation factor 4A-10 (413 aa).

Residues 40 to 68 (DSFDAMGLQENLLRGIYAYGFEKPSAIQQ) carry the Q motif motif. A Helicase ATP-binding domain is found at 71 to 241 (IVPFCKGLDV…RKFMNKPVRI (171 aa)). 84 to 91 (AQSGTGKT) is an ATP binding site. The DEAD box signature appears at 189–192 (DEAD). The Helicase C-terminal domain maps to 252-413 (GIKQFYVNVD…ELPANVADLL (162 aa)).

Belongs to the DEAD box helicase family. eIF4A subfamily. In terms of assembly, eIF4F is a multi-subunit complex, the composition of which varies with external and internal environmental conditions. It is composed of at least EIF4A, EIF4E and EIF4G.

The enzyme catalyses ATP + H2O = ADP + phosphate + H(+). ATP-dependent RNA helicase which is a subunit of the eIF4F complex involved in cap recognition and is required for mRNA binding to ribosome. In the current model of translation initiation, eIF4A unwinds RNA secondary structures in the 5'-UTR of mRNAs which is necessary to allow efficient binding of the small ribosomal subunit, and subsequent scanning for the initiator codon. This chain is Eukaryotic initiation factor 4A-10, found in Nicotiana tabacum (Common tobacco).